Here is an 88-residue protein sequence, read N- to C-terminus: Small ribosomal subunit protein uS17 (88 aa).

The protein belongs to the universal ribosomal protein uS17 family. Part of the 30S ribosomal subunit.

One of the primary rRNA binding proteins, it binds specifically to the 5'-end of 16S ribosomal RNA. In Prochlorococcus marinus (strain MIT 9312), this protein is Small ribosomal subunit protein uS17.